The primary structure comprises 336 residues: D-erythrose-4-phosphate dehydrogenase (336 aa).

11–12 contributes to the NAD(+) binding site; sequence RI. Substrate contacts are provided by residues 153–155, Arg199, 212–213, and Arg235; these read SCT and TK. Cys154 (nucleophile) is an active-site residue. Asn317 contributes to the NAD(+) binding site.

This sequence belongs to the glyceraldehyde-3-phosphate dehydrogenase family. Epd subfamily. In terms of assembly, homotetramer.

It localises to the cytoplasm. The enzyme catalyses D-erythrose 4-phosphate + NAD(+) + H2O = 4-phospho-D-erythronate + NADH + 2 H(+). It participates in cofactor biosynthesis; pyridoxine 5'-phosphate biosynthesis; pyridoxine 5'-phosphate from D-erythrose 4-phosphate: step 1/5. In terms of biological role, catalyzes the NAD-dependent conversion of D-erythrose 4-phosphate to 4-phosphoerythronate. The polypeptide is D-erythrose-4-phosphate dehydrogenase (Aeromonas salmonicida (strain A449)).